The sequence spans 226 residues: Enolase-phosphatase E1 (226 aa).

This sequence belongs to the HAD-like hydrolase superfamily. MasA/MtnC family. In terms of assembly, monomer. Requires Mg(2+) as cofactor.

The catalysed reaction is 5-methylsulfanyl-2,3-dioxopentyl phosphate + H2O = 1,2-dihydroxy-5-(methylsulfanyl)pent-1-en-3-one + phosphate. Its pathway is amino-acid biosynthesis; L-methionine biosynthesis via salvage pathway; L-methionine from S-methyl-5-thio-alpha-D-ribose 1-phosphate: step 3/6. It participates in amino-acid biosynthesis; L-methionine biosynthesis via salvage pathway; L-methionine from S-methyl-5-thio-alpha-D-ribose 1-phosphate: step 4/6. In terms of biological role, bifunctional enzyme that catalyzes the enolization of 2,3-diketo-5-methylthiopentyl-1-phosphate (DK-MTP-1-P) into the intermediate 2-hydroxy-3-keto-5-methylthiopentenyl-1-phosphate (HK-MTPenyl-1-P), which is then dephosphorylated to form the acireductone 1,2-dihydroxy-3-keto-5-methylthiopentene (DHK-MTPene). In Shewanella pealeana (strain ATCC 700345 / ANG-SQ1), this protein is Enolase-phosphatase E1.